A 494-amino-acid polypeptide reads, in one-letter code: Chromosomal replication initiator protein DnaA (494 aa).

Residues 1-103 form a domain I, interacts with DnaA modulators region; sequence MTNIGGPVVE…LRVEVIVRGM (103 aa). Residues 103–148 are domain II; it reads MKRVSKGVVCRTSAAPVVLEGQTASSFVESYTEPSVKDIEAGVFGS. Residues 149–371 are domain III, AAA+ region; it reads PLDSRYTFES…GAFNQLLFRQ (223 aa). The ATP site is built by Gly195, Gly197, Lys198, and Thr199. Residues 372-494 form a domain IV, binds dsDNA region; the sequence is SFESDLSLER…LKRLIGEQAA (123 aa).

It belongs to the DnaA family. Oligomerizes as a right-handed, spiral filament on DNA at oriC.

The protein localises to the cytoplasm. Functionally, plays an essential role in the initiation and regulation of chromosomal replication. ATP-DnaA binds to the origin of replication (oriC) to initiate formation of the DNA replication initiation complex once per cell cycle. Binds the DnaA box (a 9 base pair repeat at the origin) and separates the double-stranded (ds)DNA. Forms a right-handed helical filament on oriC DNA; dsDNA binds to the exterior of the filament while single-stranded (ss)DNA is stabiized in the filament's interior. The ATP-DnaA-oriC complex binds and stabilizes one strand of the AT-rich DNA unwinding element (DUE), permitting loading of DNA polymerase. After initiation quickly degrades to an ADP-DnaA complex that is not apt for DNA replication. Binds acidic phospholipids. The chain is Chromosomal replication initiator protein DnaA from Bartonella quintana (strain Toulouse) (Rochalimaea quintana).